Here is a 314-residue protein sequence, read N- to C-terminus: Malate dehydrogenase (314 aa).

Residues 11 to 16 (GSGNIG) and aspartate 35 each bind NAD(+). Positions 84 and 90 each coordinate substrate. Residues asparagine 97 and 120-122 (ITN) contribute to the NAD(+) site. Substrate-binding residues include asparagine 122 and arginine 153. Histidine 177 (proton acceptor) is an active-site residue.

This sequence belongs to the LDH/MDH superfamily. MDH type 3 family.

The enzyme catalyses (S)-malate + NAD(+) = oxaloacetate + NADH + H(+). Its function is as follows. Catalyzes the reversible oxidation of malate to oxaloacetate. This Rickettsia conorii (strain ATCC VR-613 / Malish 7) protein is Malate dehydrogenase.